Consider the following 741-residue polypeptide: Protein ACCUMULATION AND REPLICATION OF CHLOROPLASTS 3, chloroplastic (741 aa).

A chloroplast-targeting transit peptide spans 1–41; that stretch reads MPISMELPVFSTLRVPLFSRLALLPTFGVPFSSLGATTRLN. Disordered stretches follow at residues 444–465 and 539–558; these read ENGD…SRLD and DSRE…SSDT. A compositionally biased stretch (basic and acidic residues) spans 451–465; the sequence is YPLKEGEPSRNSRLD. The span at 546 to 558 shows a compositional bias: polar residues; sequence FNPNGSTKDSSDT. MORN repeat units follow at residues 612–628, 630–652, and 653–675; these read QGGL…GDGS, YDGM…NGDV, and FQGT…KGDR.

As to quaternary structure, self-interacts. Interacts with FTSZ, CDP1/PARC6 (via N-terminus), MIND1 and MINE1. Part of a complex made of ARC3, ARC6, FTSZ1 and FTSZ2. Recruited to the middle of the plastid by CDP1/PARC6 where subsequent complex made of CDP1/PARC6, ARC3 and FtsZ proteins can form; this complex enhances the dynamics of Z rings during chloroplast division. Binding to FTSZ2-1 is enabled by ARC6.

Its subcellular location is the plastid. It is found in the chloroplast outer membrane. The protein resides in the chloroplast stroma. Its function is as follows. Together with MIND1 and MCD1, regulates FtsZ ring positioning in chloroplasts in an ARC6-dependent manner. Z-ring accessory protein involved in the initiation of plastid division and division site placement (might functionally replace bacterial MinC). Acts as a disassembly factor that accelerates fragmentation and depolymerization of existing FtsZ2 filaments by enhancing FTSZ2 GTPase activity, thus leading to the conversion of FTSZ2 bound GTP into GDP, a process which triggers FtsZ2 filaments destabilization. Prevents misplaced Z-ring formation at chloroplast stroma nondivision sites. May control the rate of chloroplast expansion. Seems to influence stromule (stroma-filled tubular extensions of the plastid envelope membrane) length and frequency. The chain is Protein ACCUMULATION AND REPLICATION OF CHLOROPLASTS 3, chloroplastic from Arabidopsis thaliana (Mouse-ear cress).